A 230-amino-acid polypeptide reads, in one-letter code: Cytidylate kinase (230 aa).

ATP is bound at residue 13–21 (GPAGTGKSS).

This sequence belongs to the cytidylate kinase family. Type 1 subfamily.

The protein resides in the cytoplasm. It carries out the reaction CMP + ATP = CDP + ADP. The catalysed reaction is dCMP + ATP = dCDP + ADP. This chain is Cytidylate kinase, found in Mycobacterium tuberculosis (strain ATCC 25177 / H37Ra).